Reading from the N-terminus, the 482-residue chain is Mannose-1-phosphate guanylyltransferase 2 (482 aa).

This sequence belongs to the mannose-6-phosphate isomerase type 2 family.

The enzyme catalyses alpha-D-mannose 1-phosphate + GTP + H(+) = GDP-alpha-D-mannose + diphosphate. Its pathway is nucleotide-sugar biosynthesis; GDP-alpha-D-mannose biosynthesis; GDP-alpha-D-mannose from alpha-D-mannose 1-phosphate (GTP route): step 1/1. Its function is as follows. Involved in GDP-mannose biosynthesis which serves as the activated sugar nucleotide precursor for mannose residues in cell surface polysaccharides. This enzyme participates in synthesis of the LPS O antigen. The protein is Mannose-1-phosphate guanylyltransferase 2 (manC2) of Escherichia coli O157:H7.